Here is a 96-residue protein sequence, read N- to C-terminus: Co-chaperonin GroES (96 aa).

This sequence belongs to the GroES chaperonin family. As to quaternary structure, heptamer of 7 subunits arranged in a ring. Interacts with the chaperonin GroEL.

It localises to the cytoplasm. In terms of biological role, together with the chaperonin GroEL, plays an essential role in assisting protein folding. The GroEL-GroES system forms a nano-cage that allows encapsulation of the non-native substrate proteins and provides a physical environment optimized to promote and accelerate protein folding. GroES binds to the apical surface of the GroEL ring, thereby capping the opening of the GroEL channel. The polypeptide is Co-chaperonin GroES (Neisseria meningitidis serogroup A / serotype 4A (strain DSM 15465 / Z2491)).